Reading from the N-terminus, the 423-residue chain is Adenosylmethionine-8-amino-7-oxononanoate aminotransferase (423 aa).

A substrate-binding site is contributed by W51. 111–112 serves as a coordination point for pyridoxal 5'-phosphate; the sequence is GS. Position 144 (Y144) interacts with substrate. D243 provides a ligand contact to pyridoxal 5'-phosphate. Substrate contacts are provided by K272 and G306. K272 is subject to N6-(pyridoxal phosphate)lysine. 307–308 contacts pyridoxal 5'-phosphate; the sequence is PT. Residue R390 coordinates substrate.

It belongs to the class-III pyridoxal-phosphate-dependent aminotransferase family. BioA subfamily. In terms of assembly, homodimer. The cofactor is pyridoxal 5'-phosphate.

The protein resides in the cytoplasm. It carries out the reaction (8S)-8-amino-7-oxononanoate + S-adenosyl-L-methionine = S-adenosyl-4-methylsulfanyl-2-oxobutanoate + (7R,8S)-7,8-diammoniononanoate. It participates in cofactor biosynthesis; biotin biosynthesis; 7,8-diaminononanoate from 8-amino-7-oxononanoate (SAM route): step 1/1. In terms of biological role, catalyzes the transfer of the alpha-amino group from S-adenosyl-L-methionine (SAM) to 7-keto-8-aminopelargonic acid (KAPA) to form 7,8-diaminopelargonic acid (DAPA). It is the only aminotransferase known to utilize SAM as an amino donor. The chain is Adenosylmethionine-8-amino-7-oxononanoate aminotransferase from Corynebacterium glutamicum (strain ATCC 13032 / DSM 20300 / JCM 1318 / BCRC 11384 / CCUG 27702 / LMG 3730 / NBRC 12168 / NCIMB 10025 / NRRL B-2784 / 534).